Reading from the N-terminus, the 389-residue chain is Alpha-2B adrenergic receptor (389 aa).

Residues Ala-1–Leu-25 form a helical membrane-spanning segment. The Cytoplasmic portion of the chain corresponds to Thr-26 to Leu-36. A helical transmembrane segment spans residues Phe-37–Leu-62. Residues Gly-63–Cys-72 are Extracellular-facing. Cys-72 and Cys-151 form a disulfide bridge. The helical transmembrane segment at Glu-73–Leu-95 threads the bilayer. Residues Asp-96–Lys-117 lie on the Cytoplasmic side of the membrane. The helical transmembrane segment at Cys-118–Asp-140 threads the bilayer. Over Gln-141–Glu-156 the chain is Extracellular. The chain crosses the membrane as a helical span at residues Ala-157–Leu-180. Over Arg-181 to Val-353 the chain is Cytoplasmic. 2 disordered regions span residues Arg-192–Leu-218 and Asp-231–Gln-310. The span at Ala-234–Ser-249 shows a compositional bias: basic and acidic residues. The chain crosses the membrane as a helical span at residues Leu-354–Ile-377. The Extracellular segment spans residues Cys-378–His-386. Residues Gly-387 to Phe-389 form a helical membrane-spanning segment.

The protein belongs to the G-protein coupled receptor 1 family. Adrenergic receptor subfamily. ADRA2B sub-subfamily. As to quaternary structure, interacts with RAB26. Interacts with PPP1R9B.

The protein localises to the cell membrane. Functionally, alpha-2 adrenergic receptors mediate the catecholamine-induced inhibition of adenylate cyclase through the action of G proteins. The polypeptide is Alpha-2B adrenergic receptor (ADRA2B) (Procavia capensis habessinica (Abyssinian hyrax)).